We begin with the raw amino-acid sequence, 314 residues long: Solute carrier family 25 member 33 (314 aa).

Solcar repeat units lie at residues 4-111 (KDTL…SKET), 119-206 (NSGV…LKKY), and 224-308 (SDFL…IVHL). 6 helical membrane-spanning segments follow: residues 7-27 (LLHL…TCPL), 44-58 (VFQV…AGVI), 114-134 (GIFV…AAFI), 183-203 (LTAS…YETL), 226-246 (FLGL…IAYP), and 291-311 (QIPN…LLAE).

Belongs to the mitochondrial carrier (TC 2.A.29) family.

It is found in the mitochondrion inner membrane. Functionally, mitochondrial transporter that imports/exports pyrimidine nucleotides into and from mitochondria which participates in dendritic cell endocytosis. This chain is Solute carrier family 25 member 33 (slc25a33), found in Danio rerio (Zebrafish).